A 595-amino-acid polypeptide reads, in one-letter code: Elongation factor 4 2 (595 aa).

The 184-residue stretch at 4-187 folds into the tr-type G domain; that stretch reads SHIRNFAIIA…AIKQRLPAPQ (184 aa). GTP contacts are provided by residues 16–21 and 133–136; these read DHGKST and NKVD.

Belongs to the TRAFAC class translation factor GTPase superfamily. Classic translation factor GTPase family. LepA subfamily.

It localises to the cell membrane. The catalysed reaction is GTP + H2O = GDP + phosphate + H(+). Required for accurate and efficient protein synthesis under certain stress conditions. May act as a fidelity factor of the translation reaction, by catalyzing a one-codon backward translocation of tRNAs on improperly translocated ribosomes. Back-translocation proceeds from a post-translocation (POST) complex to a pre-translocation (PRE) complex, thus giving elongation factor G a second chance to translocate the tRNAs correctly. Binds to ribosomes in a GTP-dependent manner. This chain is Elongation factor 4 2, found in Lactiplantibacillus plantarum (strain ATCC BAA-793 / NCIMB 8826 / WCFS1) (Lactobacillus plantarum).